Consider the following 227-residue polypeptide: Trypsin (227 aa).

One can recognise a Peptidase S1 domain in the interval 1 to 223 (IVGGEDANVQ…YYDVLMEQIN (223 aa)). C27 and C43 are disulfide-bonded. Active-site charge relay system residues include H42 and D88. Cystine bridges form between C150/C164 and C175/C199. S179 functions as the Charge relay system in the catalytic mechanism.

This sequence belongs to the peptidase S1 family.

It carries out the reaction Preferential cleavage: Arg-|-Xaa, Lys-|-Xaa.. In Saccharopolyspora erythraea (Streptomyces erythraeus), this protein is Trypsin.